The sequence spans 124 residues: MRHYEIVFMVHPDQSEQVPAMIERYTASVKEAGGQVHRLEDWGRRQLAYPINKLHKAHYVLMNVEAPQSVIDELETNFRYNDAVLRNLIVHTKAAVTEASPMVKAKESKVAEAVAEVESEEAGE.

It belongs to the bacterial ribosomal protein bS6 family.

Its function is as follows. Binds together with bS18 to 16S ribosomal RNA. This is Small ribosomal subunit protein bS6 from Actinobacillus pleuropneumoniae serotype 7 (strain AP76).